The chain runs to 142 residues: Large ribosomal subunit protein uL11 (142 aa).

It belongs to the universal ribosomal protein uL11 family. In terms of assembly, part of the ribosomal stalk of the 50S ribosomal subunit. Interacts with L10 and the large rRNA to form the base of the stalk. L10 forms an elongated spine to which L12 dimers bind in a sequential fashion forming a multimeric L10(L12)X complex. In terms of processing, one or more lysine residues are methylated.

Its function is as follows. Forms part of the ribosomal stalk which helps the ribosome interact with GTP-bound translation factors. The sequence is that of Large ribosomal subunit protein uL11 from Mycolicibacterium vanbaalenii (strain DSM 7251 / JCM 13017 / BCRC 16820 / KCTC 9966 / NRRL B-24157 / PYR-1) (Mycobacterium vanbaalenii).